A 431-amino-acid polypeptide reads, in one-letter code: Divergent protein kinase domain 1B (431 aa).

The Cytoplasmic segment spans residues methionine 1–lysine 30. The May mediate ER retention signature appears at arginine 5 to arginine 6. A helical membrane pass occupies residues tyrosine 31–serine 51. The Lumenal segment spans residues serine 52–serine 431. 2 disulfide bridges follow: cysteine 57–cysteine 94 and cysteine 62–cysteine 117.

Belongs to the DIPK family. Post-translationally, among the many cysteines in the lumenal domain, most are probably involved in disulfide bonds.

The protein resides in the endoplasmic reticulum membrane. In Xenopus tropicalis (Western clawed frog), this protein is Divergent protein kinase domain 1B (dipk1b).